We begin with the raw amino-acid sequence, 793 residues long: Putative potassium transporter 12 (793 aa).

At 1–54 (MASISDSETTNHGSIWDLDQNLDQPMDEEASRLKNMYTEKKFSSILLLRLAFQS) the chain is on the cytoplasmic side. The helical transmembrane segment at 55–75 (LGVVFGDLGTSPLYVFYNIFP) threads the bilayer. At 76 to 87 (HGVDDDEDVIGA) the chain is on the extracellular side. The chain crosses the membrane as a helical span at residues 88-108 (LSLIIYTLTLIPLMKYVFVVL). The Cytoplasmic segment spans residues 109–175 (RANDNGQGGT…EGHVYKKNCL (67 aa)). The chain crosses the membrane as a helical span at residues 176 to 196 (LILVLIGTCTAIGDGILTPAI). Topologically, residues 197 to 215 (SVLSASGGIRVQNQKMSTD) are extracellular. A helical transmembrane segment spans residues 216–236 (VVVVVAVIILIGLFSMQHYGT). Residues 237-238 (DK) lie on the Cytoplasmic side of the membrane. A helical membrane pass occupies residues 239–259 (VGWLFAPIVLLWFILIGTIGA). Residues 260-289 (LNIHKYNSSVLKAYNPVYIYRYFRRGKSES) are Extracellular-facing. Asn266 carries N-linked (GlcNAc...) asparagine glycosylation. The helical transmembrane segment at 290-310 (WTSLGGIMLSITGTEALYADL) threads the bilayer. Residues 311–315 (CHFPV) lie on the Cytoplasmic side of the membrane. The chain crosses the membrane as a helical span at residues 316 to 338 (LAIQIAFTLVVFPCLLLAYTGQA). Over 339-359 (AYIISNKDHVVDAFYRSIPDT) the chain is Extracellular. Residues 360-380 (IYWPVFIIATLAAIVASQATI) form a helical membrane-spanning segment. Residues 381–411 (SATYSIIKQALALGCFPRVSVVHTSKKFLGQ) are Cytoplasmic-facing. The chain crosses the membrane as a helical span at residues 412 to 432 (IYIPDINWVLMILCIAVTAGF). Topologically, residues 433 to 444 (KNQSQIGNAYGT) are extracellular. N-linked (GlcNAc...) asparagine glycosylation is present at Asn434. The chain crosses the membrane as a helical span at residues 445-465 (AVVIVMLVTTFLMVPIMLLVW). Over 466–468 (KSH) the chain is Cytoplasmic. The chain crosses the membrane as a helical span at residues 469-489 (WILVVIFIVLSLMVELPYFTA). Residues 490–496 (CINKVDQ) are Extracellular-facing. A helical transmembrane segment spans residues 497-517 (GGWVPLVVATTCFIIMYVWHF). Residues 518 to 793 (CTVKRYEFEM…LLNVGQIYYI (276 aa)) lie on the Cytoplasmic side of the membrane.

This sequence belongs to the HAK/KUP transporter (TC 2.A.72.3) family.

Its subcellular location is the membrane. Its function is as follows. High-affinity potassium transporter. This chain is Putative potassium transporter 12 (HAK12), found in Oryza sativa subsp. japonica (Rice).